A 204-amino-acid chain; its full sequence is Ribonuclease HII (204 aa).

One can recognise an RNase H type-2 domain in the interval 17–204; it reads TLIAGVDEVG…KPVKKVLGLL (188 aa). Positions 23, 24, and 115 each coordinate a divalent metal cation.

Belongs to the RNase HII family. Mn(2+) serves as cofactor. It depends on Mg(2+) as a cofactor.

It is found in the cytoplasm. The catalysed reaction is Endonucleolytic cleavage to 5'-phosphomonoester.. Its function is as follows. Endonuclease that specifically degrades the RNA of RNA-DNA hybrids. This is Ribonuclease HII from Psychromonas ingrahamii (strain DSM 17664 / CCUG 51855 / 37).